The primary structure comprises 205 residues: Adenylyl-sulfate kinase (205 aa).

Residue 31–38 (GLSGAGKS) participates in ATP binding. Catalysis depends on Ser-105, which acts as the Phosphoserine intermediate.

Belongs to the APS kinase family.

It catalyses the reaction adenosine 5'-phosphosulfate + ATP = 3'-phosphoadenylyl sulfate + ADP + H(+). It functions in the pathway sulfur metabolism; hydrogen sulfide biosynthesis; sulfite from sulfate: step 2/3. Functionally, catalyzes the synthesis of activated sulfate. The sequence is that of Adenylyl-sulfate kinase from Shewanella sp. (strain ANA-3).